Consider the following 158-residue polypeptide: 6,7-dimethyl-8-ribityllumazine synthase (158 aa).

5-amino-6-(D-ribitylamino)uracil contacts are provided by residues Phe-22, 57 to 59, and 81 to 83; these read AVE and AVI. A (2S)-2-hydroxy-3-oxobutyl phosphate-binding site is contributed by 86-87; it reads GT. His-89 (proton donor) is an active-site residue. Residue Phe-114 coordinates 5-amino-6-(D-ribitylamino)uracil. Arg-128 contributes to the (2S)-2-hydroxy-3-oxobutyl phosphate binding site.

The protein belongs to the DMRL synthase family. In terms of assembly, forms an icosahedral capsid composed of 60 subunits, arranged as a dodecamer of pentamers.

The enzyme catalyses (2S)-2-hydroxy-3-oxobutyl phosphate + 5-amino-6-(D-ribitylamino)uracil = 6,7-dimethyl-8-(1-D-ribityl)lumazine + phosphate + 2 H2O + H(+). Its pathway is cofactor biosynthesis; riboflavin biosynthesis; riboflavin from 2-hydroxy-3-oxobutyl phosphate and 5-amino-6-(D-ribitylamino)uracil: step 1/2. Catalyzes the formation of 6,7-dimethyl-8-ribityllumazine by condensation of 5-amino-6-(D-ribitylamino)uracil with 3,4-dihydroxy-2-butanone 4-phosphate. This is the penultimate step in the biosynthesis of riboflavin. The chain is 6,7-dimethyl-8-ribityllumazine synthase from Shewanella putrefaciens (strain CN-32 / ATCC BAA-453).